The chain runs to 360 residues: Phospho-N-acetylmuramoyl-pentapeptide-transferase (360 aa).

Residues 1–25 lie on the Periplasmic side of the membrane; sequence MLVWLAEHLVKYYSGFNVFSYLTFR. Residues 26-46 form a helical membrane-spanning segment; the sequence is AIVSLLTALFISLWMGPRMIA. Topologically, residues 47–71 are cytoplasmic; the sequence is RLQKLSFGQVVRNDGPESHFSKRGT. A helical transmembrane segment spans residues 72–92; that stretch reads PTMGGIMILTAIVISVLLWAY. Residue proline 93 is a topological domain, periplasmic. The chain crosses the membrane as a helical span at residues 94-114; sequence SNPYVWCVLVVLIGYGIIGFV. At 115 to 131 the chain is on the cytoplasmic side; it reads DDYRKVVRKDTKGLIAR. Residues 132 to 152 traverse the membrane as a helical segment; the sequence is WKYFWMSVIALGVAFALYLVG. Residues 153-167 are Periplasmic-facing; it reads KDTPATQLVVPFFKD. Residues 168–188 traverse the membrane as a helical segment; sequence VMPQLGLFYILLSYFVIVGTG. Residues 189 to 198 lie on the Cytoplasmic side of the membrane; that stretch reads NAVNLTDGLD. A helical membrane pass occupies residues 199–219; it reads GLAIMPTVFVAAGFALVAWAT. The Periplasmic portion of the chain corresponds to 220-235; the sequence is GNMNFANYLHIPYLRH. The chain crosses the membrane as a helical span at residues 236 to 256; the sequence is AGELVIVCTAIVGAGLGFLWF. Over 257-262 the chain is Cytoplasmic; the sequence is NTYPAQ. Residues 263 to 283 form a helical membrane-spanning segment; it reads VFMGDVGSLALGGALGIIAVL. Residues 284 to 287 are Periplasmic-facing; sequence LRQE. Residues 288–308 form a helical membrane-spanning segment; the sequence is FLLVIMGGVFVVETLSVILQV. At 309-337 the chain is on the cytoplasmic side; that stretch reads GSFKLRGQRIFRMAPIHHHYELKGWPEPR. Residues 338–358 traverse the membrane as a helical segment; sequence VIVRFWIISLMLVLIGLATLK. At 359–360 the chain is on the periplasmic side; it reads VR.

It belongs to the glycosyltransferase 4 family. MraY subfamily. It depends on Mg(2+) as a cofactor.

The protein localises to the cell inner membrane. The enzyme catalyses UDP-N-acetyl-alpha-D-muramoyl-L-alanyl-gamma-D-glutamyl-meso-2,6-diaminopimeloyl-D-alanyl-D-alanine + di-trans,octa-cis-undecaprenyl phosphate = di-trans,octa-cis-undecaprenyl diphospho-N-acetyl-alpha-D-muramoyl-L-alanyl-D-glutamyl-meso-2,6-diaminopimeloyl-D-alanyl-D-alanine + UMP. Its pathway is cell wall biogenesis; peptidoglycan biosynthesis. Its function is as follows. Catalyzes the initial step of the lipid cycle reactions in the biosynthesis of the cell wall peptidoglycan: transfers peptidoglycan precursor phospho-MurNAc-pentapeptide from UDP-MurNAc-pentapeptide onto the lipid carrier undecaprenyl phosphate, yielding undecaprenyl-pyrophosphoryl-MurNAc-pentapeptide, known as lipid I. The sequence is that of Phospho-N-acetylmuramoyl-pentapeptide-transferase from Salmonella agona (strain SL483).